Reading from the N-terminus, the 451-residue chain is Multidrug export protein MepA (451 aa).

Transmembrane regions (helical) follow at residues 26–46, 54–74, 97–117, 139–159, 170–190, 194–214, 245–265, 282–302, 318–338, 355–375, 397–417, and 418–438; these read MIGT…IGFL, AISL…LFGV, SFSI…TLPF, LKVM…EQFA, IGML…IFGF, VVGA…FFII, IPAF…NLFL, LVQF…PLIA, AVIM…FTIG, ATFI…GFLF, AIII…GVIW, and SLLI…YLLR.

The protein belongs to the multi antimicrobial extrusion (MATE) (TC 2.A.66.1) family. MepA subfamily.

The protein localises to the cell membrane. Functionally, multidrug resistance efflux protein. Contributes to resistance to the glycylcycline antibiotic tigecycline. This Staphylococcus aureus (strain N315) protein is Multidrug export protein MepA (mepA).